Reading from the N-terminus, the 561-residue chain is DNA ligase B (561 aa).

Residue Lys-125 is the N6-AMP-lysine intermediate of the active site.

It belongs to the NAD-dependent DNA ligase family. LigB subfamily.

The enzyme catalyses NAD(+) + (deoxyribonucleotide)n-3'-hydroxyl + 5'-phospho-(deoxyribonucleotide)m = (deoxyribonucleotide)n+m + AMP + beta-nicotinamide D-nucleotide.. Catalyzes the formation of phosphodiester linkages between 5'-phosphoryl and 3'-hydroxyl groups in double-stranded DNA using NAD as a coenzyme and as the energy source for the reaction. The chain is DNA ligase B from Salmonella enteritidis PT4 (strain P125109).